A 149-amino-acid chain; its full sequence is Succinate dehydrogenase assembly factor 2, mitochondrial (149 aa).

It belongs to the SDHAF2 family. Interacts with the flavoprotein subunit within the SDH catalytic dimer.

The protein localises to the mitochondrion matrix. Plays an essential role in the assembly of succinate dehydrogenase (SDH), an enzyme complex (also referred to as respiratory complex II) that is a component of both the tricarboxylic acid (TCA) cycle and the mitochondrial electron transport chain, and which couples the oxidation of succinate to fumarate with the reduction of ubiquinone (coenzyme Q) to ubiquinol. Required for flavinylation (covalent attachment of FAD) of the flavoprotein subunit of the SDH catalytic dimer. The chain is Succinate dehydrogenase assembly factor 2, mitochondrial from Scheffersomyces stipitis (strain ATCC 58785 / CBS 6054 / NBRC 10063 / NRRL Y-11545) (Yeast).